A 627-amino-acid polypeptide reads, in one-letter code: Druantia protein DruC (627 aa).

The protein resides in the cytoplasm. Its function is as follows. Component of antiviral defense system Druantia type I, composed of DruA, DruB, DruC, DruD and DruE. Expression of Druantia in E.coli (strain MG1655) confers resistance to phage lambda, SECphi18, SECphi27 and T4. The chain is Druantia protein DruC from Escherichia coli (strain UMEA 4076-1).